We begin with the raw amino-acid sequence, 128 residues long: Nascent polypeptide-associated complex protein (128 aa).

Residues 8 to 75 (PRMLKKMQKM…PKKIKKEKVE (68 aa)) form the NAC-A/B domain.

The protein belongs to the NAC-alpha family. In terms of assembly, homodimer. Interacts with the ribosome. Binds ribosomal RNA.

Its function is as follows. Contacts the emerging nascent chain on the ribosome. The sequence is that of Nascent polypeptide-associated complex protein from Methanocaldococcus jannaschii (strain ATCC 43067 / DSM 2661 / JAL-1 / JCM 10045 / NBRC 100440) (Methanococcus jannaschii).